We begin with the raw amino-acid sequence, 376 residues long: Putative cytosolic 5'-nucleotidase 3 (376 aa).

Asp-119 (nucleophile) is an active-site residue. Mg(2+) contacts are provided by Asp-119 and Asp-121. Residue Asp-121 is the Proton donor of the active site. Substrate-binding positions include Glu-168, Ser-189, 236-237 (SA), and Lys-286. Residue Asp-312 coordinates Mg(2+).

The protein belongs to the pyrimidine 5'-nucleotidase family.

It localises to the cytoplasm. The catalysed reaction is a ribonucleoside 5'-phosphate + H2O = a ribonucleoside + phosphate. The protein is Putative cytosolic 5'-nucleotidase 3 of Caenorhabditis elegans.